The sequence spans 204 residues: 8-oxoguanine DNA glycosylase/AP lyase (204 aa).

Residues K129 and D147 contribute to the active site.

It belongs to the type-2 OGG1 family.

It carries out the reaction 2'-deoxyribonucleotide-(2'-deoxyribose 5'-phosphate)-2'-deoxyribonucleotide-DNA = a 3'-end 2'-deoxyribonucleotide-(2,3-dehydro-2,3-deoxyribose 5'-phosphate)-DNA + a 5'-end 5'-phospho-2'-deoxyribonucleoside-DNA + H(+). In terms of biological role, catalyzes the excision of an oxidatively damaged form of guanine (7,8-dihydro-8-oxoguanine = 8-oxoG) from DNA. Also cleaves the DNA backbone at apurinic/apyrimidinic sites (AP sites). Prefers oligomers containing 8-oxoG:C, 8-oxoG:T and 8-oxoG:G base pairs, and is less effective on oligomers containing 8-oxoG:A mispairs. The protein is 8-oxoguanine DNA glycosylase/AP lyase of Thermoplasma volcanium (strain ATCC 51530 / DSM 4299 / JCM 9571 / NBRC 15438 / GSS1).